Reading from the N-terminus, the 500-residue chain is MSDLKTEAQDLQQEENALIALRKEKLAAERVKGNAFPNDFRRDSYCNDLQKQYADKTKEELEAAAIPVKVAGRIMLNRGSFMVIQDMTGRIQVYVNRKTLSEDTLAAVKTWDLGDIISAEGTLARSGKGDLYVEMTNVRLLTKSLRPLPDKHHGLTDTEQRYRQRYVDLMVNEETRHTFRVRSQVISHIRKFLIERDFLEVETPMLQTIPGGAAAKPFETHHNALDMAMFLRIAPELYLKRLVVGGFEKVFEINRNFRNEGVSTRHNPEFTMLEFYQAYADYRDNMDLTEELFRELAQLVLGSTDVPYGDKVFHFGEPFVRLSVFDSILKYNPELTAADLQDVDRAREIAKKAGAKVLGHEGLGKLQVMIFEELVEHKLEQPHFITEYPFEVSPLARRNDDNPAVTDRFELFIGGREIANAYSELNDAEDQAERFLAQVAEKDAGDDEAMHYDADFVRALEYGMPPTAGEGIGIDRLVMLLTNSPSIRDVILFPHMRPQA.

Positions 410 and 417 each coordinate Mg(2+).

This sequence belongs to the class-II aminoacyl-tRNA synthetase family. As to quaternary structure, homodimer. Mg(2+) serves as cofactor.

It is found in the cytoplasm. The enzyme catalyses tRNA(Lys) + L-lysine + ATP = L-lysyl-tRNA(Lys) + AMP + diphosphate. The sequence is that of Lysine--tRNA ligase from Pseudomonas entomophila (strain L48).